A 960-amino-acid polypeptide reads, in one-letter code: MWRLRRAAVACEVCQSLVKHSSGIKGSLPLQKLHLVSRSIYHSHHPTLKLQRPQLRTSFQQFSSLTNLPLRKLKFSPIKYGYQPRRNFWPARLATRLLKLRYLILGSAVGGGYTAKKTFDQWKDMIPDLSEYKWIVPDIVWEIDEYIDFEKIRKALPSSEDLVKLAPDFDKIVESLSLLKDFFTSGSPEETAFRATDRGSESDKHFRKVSDKEKIDQLQEELLHTQLKYQRILERLEKENKELRKLVLQKDDKGIHHRKLKKSLIDMYSEVLDVLSDYDASYNTQDHLPRVVVVGDQSAGKTSVLEMIAQARIFPRGSGEMMTRSPVKVTLSEGPHHVALFKDSSREFDLTKEEDLAALRHEIELRMRKNVKEGCTVSPETISLNVKGPGLQRMVLVDLPGVINTVTSGMAPDTKETIFSISKAYMQNPNAIILCIQDGSVDAERSIVTDLVSQMDPHGRRTIFVLTKVDLAEKNVASPSRIQQIIEGKLFPMKALGYFAVVTGKGNSSESIEAIREYEEEFFQNSKLLKTSMLKAHQVTTRNLSLAVSDCFWKMVRESVEQQADSFKATRFNLETEWKNNYPRLRELDRNELFEKAKNEILDEVISLSQVTPKHWEEILQQSLWERVSTHVIENIYLPAAQTMNSGTFNTTVDIKLKQWTDKQLPNKAVEVAWETLQEEFSRFMTEPKGKEHDDIFDKLKEAVKEESIKRHKWNDFAEDSLRVIQHNALEDRSISDKQQWDAAIYFMEEALQARLKDTENAIENMVGPDWKKRWLYWKNRTQEQCVHNETKNELEKMLKCNEEHPAYLASDEITTVRKNLESRGVEVDPSLIKDTWHQVYRRHFLKTALNHCNLCRRGFYYYQRHFVDSELECNDVVLFWRIQRMLAITANTLRQQLTNTEVRRLEKNVKEVLEDFAEDGEKKIKLLTGKRVQLAEDLKKVREIQEKLDAFIEALHQEK.

The transit peptide at 1–87 directs the protein to the mitochondrion; it reads MWRLRRAAVA…IKYGYQPRRN (87 aa). Over 88-96 the chain is Mitochondrial matrix; sequence FWPARLATR. Residues 97–113 form a helical membrane-spanning segment; that stretch reads LLKLRYLILGSAVGGGY. Residues 114–770 are Mitochondrial intermembrane-facing; that stretch reads TAKKTFDQWK…NAIENMVGPD (657 aa). 2 short sequence motifs (LQQQIQ motif) span residues 181–186 and 217–222; these read DFFTSG and QLQEEL. Residues 210 to 254 are a coiled coil; it reads SDKEKIDQLQEELLHTQLKYQRILERLEKENKELRKLVLQKDDKG. Lys-228 is modified (N6-acetyllysine). The short motif at 235–240 is the LQQQIQ motif element; the sequence is RLEKEN. The 277-residue stretch at 285 to 561 folds into the Dynamin-type G domain; sequence QDHLPRVVVV…FWKMVRESVE (277 aa). A G1 motif region spans residues 295–302; it reads GDQSAGKT. Positions 298, 300, 301, 302, 303, and 317 each coordinate GTP. Thr-302 serves as a coordination point for Mg(2+). Residues 321–324 are G2 motif; sequence MMTR. 2 residues coordinate Mg(2+): Thr-323 and Asp-398. The tract at residues 398–401 is G3 motif; sequence DLPG. A G4 motif region spans residues 467–470; the sequence is TKVD. 5 residues coordinate GTP: Lys-468, Asp-470, Thr-503, Gly-506, and Asn-507. Positions 501 to 504 are G5 motif; that stretch reads VVTG. 2 stalk region regions span residues 589–836 and 874–928; these read DRNE…IKDT and CNDV…IKLL. The interval 736 to 856 is paddle region; the sequence is SDKQQWDAAI…KTALNHCNLC (121 aa). The stretch at 771–781 is an intramembrane region; that stretch reads WKKRWLYWKNR. Residues 782-960 lie on the Mitochondrial intermembrane side of the membrane; it reads TQEQCVHNET…AFIEALHQEK (179 aa). A disulfide bridge links Cys-856 with Cys-874. Residues 895-960 adopt a coiled-coil conformation; the sequence is RQQLTNTEVR…AFIEALHQEK (66 aa).

Belongs to the TRAFAC class dynamin-like GTPase superfamily. Dynamin/Fzo/YdjA family. Oligomeric complex consisting of membrane-bound and soluble forms of OPA1. Interacts with RCC1L; RCC1L acts as a guanine nucleotide exchange factor (GEF) for OPA1 by exchanging bound GDP for free GTP. Interacts with CHCHD3 and IMMT; these interactions occur preferentially with soluble OPA1 forms. Interacts with PRELID1. Post-translationally, cleaved by OMA1 or YME1L downstream of the transmembrane region in response to different signals to generate soluble forms. Cleaved by OMA1 at position S1 following stress conditions, generating the short soluble form (Dynamin-like GTPase OPA1, short form; S-OPA1). AFG3L2 is involved in the regulation of OMA1-dependent processing of OPA1. PARL-dependent proteolytic processing releases an antiapoptotic soluble form not required for mitochondrial fusion. In terms of processing, cleavage at position S2 by YME1L is required to mediate oxidative phosphorylation (OXPHOS)-induced mitochondrial fusion. Cleavage occurs in the sequence motif Leu-Gln-Gln-Gln-Ile-Gln (LQQQIQ). Cleavage at position S2 by YME1L is required to mediate oxidative phosphorylation (OXPHOS)-induced mitochondrial fusion. Cleavage occurs in the sequence motif Leu-Gln-Gln-Gln-Ile-Gln (LQQQIQ). Cleavage at position S3 by YME1L is required for membrane tubulation. Post-translationally, cleavage at position S3 by YME1L is required for membrane tubulation. In terms of tissue distribution, highly expressed in retina. Also expressed in brain, testis, heart and skeletal muscle. Low levels of all isoforms expressed in a variety of tissues. Expressed in retina, skeletal muscle, heart, lung, ovary, colon, thyroid gland, leukocytes and fetal brain. Low levels of all isoforms expressed in a variety of tissues. As to expression, isoform 2 expressed in colon, liver, kidney, thyroid gland and leukocytes.

Its subcellular location is the mitochondrion inner membrane. The protein resides in the mitochondrion intermembrane space. It carries out the reaction GTP + H2O = GDP + phosphate + H(+). Its activity is regulated as follows. Activated by guanine nucleotide exchange factor RCC1L. Functionally, dynamin-related GTPase that is essential for normal mitochondrial morphology by mediating fusion of the mitochondrial inner membranes, regulating cristae morphology and maintaining respiratory chain function. Exists in two forms: the transmembrane, long form (Dynamin-like GTPase OPA1, long form; L-OPA1), which is tethered to the inner mitochondrial membrane, and the short soluble form (Dynamin-like GTPase OPA1, short form; S-OPA1), which results from proteolytic cleavage and localizes in the intermembrane space. Both forms (L-OPA1 and S-OPA1) cooperate to catalyze the fusion of the mitochondrial inner membrane. The equilibrium between L-OPA1 and S-OPA1 is essential: excess levels of S-OPA1, produced by cleavage by OMA1 following loss of mitochondrial membrane potential, lead to an impaired equilibrium between L-OPA1 and S-OPA1, inhibiting mitochondrial fusion. The balance between L-OPA1 and S-OPA1 also influences cristae shape and morphology. Involved in remodeling cristae and the release of cytochrome c during apoptosis. Proteolytic processing by PARL in response to intrinsic apoptotic signals may lead to disassembly of OPA1 oligomers and release of the caspase activator cytochrome C (CYCS) into the mitochondrial intermembrane space. Acts as a regulator of T-helper Th17 cells, which are characterized by cells with fused mitochondria with tight cristae, by mediating mitochondrial membrane remodeling: OPA1 is required for interleukin-17 (IL-17) production. Its role in mitochondrial morphology is required for mitochondrial genome maintenance. Its function is as follows. Constitutes the transmembrane long form (L-OPA1) that plays a central role in mitochondrial inner membrane fusion and cristae morphology. L-OPA1 and the soluble short form (S-OPA1) form higher-order helical assemblies that coordinate the fusion of mitochondrial inner membranes. Inner membrane-anchored L-OPA1 molecules initiate membrane remodeling by recruiting soluble S-OPA1 to rapidly polymerize into a flexible cylindrical scaffold encaging the mitochondrial inner membrane. Once at the membrane surface, the formation of S-OPA1 helices induce bilayer curvature. OPA1 dimerization through the paddle region, which inserts into cardiolipin-containing membrane, promotes GTP hydrolysis and the helical assembly of a flexible OPA1 lattice on the membrane, which drives membrane curvature and mitochondrial fusion. Plays a role in the maintenance and remodeling of mitochondrial cristae, some invaginations of the mitochondrial inner membrane that provide an increase in the surface area. Probably acts by forming helical filaments at the inside of inner membrane tubes with the shape and dimensions of crista junctions. The equilibrium between L-OPA1 and S-OPA1 influences cristae shape and morphology: increased L-OPA1 levels promote cristae stacking and elongated mitochondria, while increased S-OPA1 levels correlated with irregular cristae packing and round mitochondria shape. In terms of biological role, constitutes the soluble short form (S-OPA1) generated by cleavage by OMA1, which plays a central role in mitochondrial inner membrane fusion and cristae morphology. The transmembrane long form (L-OPA1) and the S-OPA1 form higher-order helical assemblies that coordinate the fusion of mitochondrial inner membranes. Inner membrane-anchored L-OPA1 molecules initiate membrane remodeling by recruiting soluble S-OPA1 to rapidly polymerize into a flexible cylindrical scaffold encaging the mitochondrial inner membrane. Once at the membrane surface, the formation of S-OPA1 helices induce bilayer curvature. OPA1 dimerization through the paddle region, which inserts into cardiolipin-containing membrane, promotes GTP hydrolysis and the helical assembly of a flexible OPA1 lattice on the membrane, which drives membrane curvature and mitochondrial fusion. Excess levels of S-OPA1 produced by cleavage by OMA1 following stress conditions that induce loss of mitochondrial membrane potential, lead to an impaired equilibrium between L-OPA1 and S-OPA1, thereby inhibiting mitochondrial fusion. Involved in mitochondrial safeguard in response to transient mitochondrial membrane depolarization by mediating flickering: cleavage by OMA1 leads to excess production of S-OPA1, preventing mitochondrial hyperfusion. Plays a role in the maintenance and remodeling of mitochondrial cristae, some invaginations of the mitochondrial inner membrane that provide an increase in the surface area. Probably acts by forming helical filaments at the inside of inner membrane tubes with the shape and dimensions of crista junctions. The equilibrium between L-OPA1 and S-OPA1 influences cristae shape and morphology: increased L-OPA1 levels promote cristae stacking and elongated mitochondria, while increased S-OPA1 levels correlated with irregular cristae packing and round mitochondria shape. Coexpression of isoform 1 with shorter alternative products is required for optimal activity in promoting mitochondrial fusion. Functionally, isoforms that contain the alternative exon 4b are required for mitochondrial genome maintenance, possibly by anchoring the mitochondrial nucleoids to the inner mitochondrial membrane. This chain is Dynamin-like GTPase OPA1, mitochondrial, found in Homo sapiens (Human).